A 617-amino-acid polypeptide reads, in one-letter code: Proline--tRNA ligase (617 aa).

Belongs to the class-II aminoacyl-tRNA synthetase family. ProS type 1 subfamily. Homodimer.

Its subcellular location is the cytoplasm. The enzyme catalyses tRNA(Pro) + L-proline + ATP = L-prolyl-tRNA(Pro) + AMP + diphosphate. Catalyzes the attachment of proline to tRNA(Pro) in a two-step reaction: proline is first activated by ATP to form Pro-AMP and then transferred to the acceptor end of tRNA(Pro). As ProRS can inadvertently accommodate and process non-cognate amino acids such as alanine and cysteine, to avoid such errors it has two additional distinct editing activities against alanine. One activity is designated as 'pretransfer' editing and involves the tRNA(Pro)-independent hydrolysis of activated Ala-AMP. The other activity is designated 'posttransfer' editing and involves deacylation of mischarged Ala-tRNA(Pro). The misacylated Cys-tRNA(Pro) is not edited by ProRS. This Streptococcus pneumoniae (strain ATCC BAA-255 / R6) protein is Proline--tRNA ligase.